Here is a 448-residue protein sequence, read N- to C-terminus: MSRKLITINQVKDYVGQEVTIGAWVANKSGKGKLAFLQLRDGTAFFQAVAFKPNFIEKFGEEAGTEKFDVAKRLSQETSVYVTGIVKEDERSKFGYELDVTDLEVIGESQDYPITPKEHGTDFLMDNRHLWLRSRKQVAIQQIRNAIIYATYEFFEKNGFIKFDSPILSGNAAEDSTELFETDYFGQLAYLSQSGQLYLEAGAMALGRVFDFGPVFRAEKSKTRRHLTEFWMMDAEYSFLSHEESLDLQEAYVKALIQGVIDRAPQALETLERDVDALKRYIAEPFKRVAYDDAITLLQEHEADKDTDYEHIEHGDDFGSPHETWISNYFGVPTFVVNYPASFKAFYMKPVPGNPERVLCADLLAPEGYGEIIGGSMREDNYDALVAKMDELGMDKSEYEFYLDLRKYGSVPHGGFGIGIERMVTFVAGTKHIREAIPFPRMLHRLHP.

This sequence belongs to the class-II aminoacyl-tRNA synthetase family. In terms of assembly, homodimer.

The protein resides in the cytoplasm. The catalysed reaction is tRNA(Asn) + L-asparagine + ATP = L-asparaginyl-tRNA(Asn) + AMP + diphosphate + H(+). The sequence is that of Asparagine--tRNA ligase from Streptococcus suis (strain 98HAH33).